A 521-amino-acid polypeptide reads, in one-letter code: Medium/long-chain-fatty-acid--[acyl-carrier-protein] ligase MbtM (521 aa).

Belongs to the ATP-dependent AMP-binding enzyme family.

The enzyme catalyses a long-chain fatty acid + holo-[ACP] + ATP = a long-chain fatty acyl-[ACP] + AMP + diphosphate. The catalysed reaction is a medium-chain fatty acid + holo-[ACP] + ATP = a medium-chain fatty acyl-[ACP] + AMP + diphosphate. Its pathway is siderophore biosynthesis; mycobactin biosynthesis. In terms of biological role, activates lipidic moieties required for mycobactin biosynthesis. Converts medium- to long-chain aliphatic fatty acids into acyl adenylate, which is further transferred on to the phosphopantetheine arm of the carrier protein MbtL. This chain is Medium/long-chain-fatty-acid--[acyl-carrier-protein] ligase MbtM (mbtM), found in Mycobacterium sp. (strain MCS).